The primary structure comprises 1219 residues: Myosin-5 (1219 aa).

Residues 1-12 (MAILKRGARKKV) show a composition bias toward basic residues. The tract at residues 1–20 (MAILKRGARKKVHQEPAKRS) is disordered. The region spanning 36 to 715 (VGVSDLTLLS…TLFALEHMRD (680 aa)) is the Myosin motor domain. 129-136 (GESGAGKT) provides a ligand contact to ATP. Serine 357 bears the Phosphoserine mark. Tyrosine 359 carries the phosphotyrosine modification. The actin-binding stretch occupies residues 404-486 (SIGILDIYGF…PGIFAAMNDS (83 aa)). IQ domains follow at residues 719–739 (HNMA…RIDA) and 740–765 (ATKI…YGTK). Residues 771–961 (KERRSMSLLG…TISVRRGNPP (191 aa)) enclose the TH1 domain. Residue serine 777 is modified to Phosphoserine. Residues 951–964 (STISVRRGNPPNSQ) are compositionally biased toward polar residues. Disordered stretches follow at residues 951 to 1106 (STIS…SELP) and 1139 to 1167 (TAYM…VLNS). The segment covering 974–984 (SISSGYHASSS) has biased composition (low complexity). Serine 992 carries the phosphoserine modification. Positions 1030-1041 (NPASTLTASQSN) are enriched in polar residues. The span at 1048–1063 (TAATRATPAATPAAAA) shows a compositional bias: low complexity. A compositionally biased stretch (pro residues) spans 1072–1083 (IPPPPPPPPPSS). The SH3 domain occupies 1085–1147 (PKEPMFEAAY…PTAYMKPHSG (63 aa)). At serine 1205 the chain carries Phosphoserine.

The protein belongs to the TRAFAC class myosin-kinesin ATPase superfamily. Myosin family. In terms of assembly, interacts (via myosin motor domain) with SHE4; this interaction is important for proper localization and may regulate the interaction of the motor domain with actin. Interacts (via SH3 domain) with VRP1; this interaction is required for localization to sites of polarized growth and may regulate the interaction of the tail domain with actin. Interacts (via SH3 domain) with PAN1; this interaction is important for late stages of endocytopsis. Interacts (via SH3 domain) with BBC1 and LAS17. Interacts (via C-terminal acidic tail) with ARC19 and ARC40; ARC19 and ARC40 are Arp2/3 complex subunits. Interacts with BZZ1, PKH1, PKH2, YPK1 and YPK2. Post-translationally, phosphorylation of the TEDS site (Ser-357) is required for the polarization of the actin cytoskeleton and for ligand-induced, but not for constitutive internalization of STE2. Phosphorylation probably activates the myosin-I ATPase activity. Ser-357 is phosphorylated by YPK2 in vitro.

It is found in the cytoplasm. The protein resides in the cytoskeleton. It localises to the actin patch. One of two redundant type-I myosins implicated in the organization of the actin cytoskeleton. Required for proper actin cytoskeleton polarization and for the internalization step in endocytosis. At the cell cortex, assembles in patch-like structures together with proteins from the actin-polymerizing machinery and promotes actin assembly. Functions redundantly with LAS17 as actin nucleation-promoting factor (NPF) for the Arp2/3 complex. Motor domain phosphorylation by PAK kinases CLA4 and STE20 promotes CDC42-regulated actin assembly. Functions together with the NPF PAN1 in late stages of endocytosis. Motor domain phosphorylation by PDK1 kinases PKH1 and PKH2, and by SGK kinases YPK1 and YPK2, promotes ligand-induced, but not constitutive endocytosis of the G protein-coupled receptor STE2. In Saccharomyces cerevisiae (strain YJM789) (Baker's yeast), this protein is Myosin-5 (MYO5).